We begin with the raw amino-acid sequence, 284 residues long: Diaminopimelate epimerase (284 aa).

Positions 20, 53, and 73 each coordinate substrate. The active-site Proton donor is the Cys82. Residues 83–84 (GN), Asn167, Asn200, and 218–219 (ER) contribute to the substrate site. The active-site Proton acceptor is Cys227. Residue 228-229 (GS) coordinates substrate.

The protein belongs to the diaminopimelate epimerase family. In terms of assembly, homodimer.

It is found in the cytoplasm. It carries out the reaction (2S,6S)-2,6-diaminopimelate = meso-2,6-diaminopimelate. It participates in amino-acid biosynthesis; L-lysine biosynthesis via DAP pathway; DL-2,6-diaminopimelate from LL-2,6-diaminopimelate: step 1/1. In terms of biological role, catalyzes the stereoinversion of LL-2,6-diaminopimelate (L,L-DAP) to meso-diaminopimelate (meso-DAP), a precursor of L-lysine and an essential component of the bacterial peptidoglycan. This chain is Diaminopimelate epimerase, found in Xylella fastidiosa (strain M12).